The sequence spans 280 residues: 3,2-trans-enoyl-CoA isomerase (280 aa).

Substrate contacts are provided by residues 68–72 and Leu126; that span reads SGADF. The active-site Proton donor/acceptor is the Glu158. A Microbody targeting signal motif is present at residues 278–280; sequence HRL.

This sequence belongs to the enoyl-CoA hydratase/isomerase family. In terms of assembly, homohexamer, dimer of trimers. Interacts with DCI1.

The protein localises to the peroxisome. The enzyme catalyses a (3Z)-enoyl-CoA = a 4-saturated (2E)-enoyl-CoA. The catalysed reaction is a (3E)-enoyl-CoA = a 4-saturated (2E)-enoyl-CoA. Its pathway is lipid metabolism; fatty acid beta-oxidation. Functionally, essential for the beta oxidation of unsaturated fatty acids. In Saccharomyces cerevisiae (strain ATCC 204508 / S288c) (Baker's yeast), this protein is 3,2-trans-enoyl-CoA isomerase (ECI1).